The primary structure comprises 368 residues: Methionine import ATP-binding protein MetN (368 aa).

The ABC transporter domain maps to 5 to 260 (IELNNLSVQF…PKEALTKQFI (256 aa)). Residue 41–48 (GYSGAGKS) coordinates ATP.

It belongs to the ABC transporter superfamily. Methionine importer (TC 3.A.1.24) family. The complex is composed of two ATP-binding proteins (MetN), two transmembrane proteins (MetI) and a solute-binding protein (MetQ).

The protein localises to the cell membrane. It carries out the reaction L-methionine(out) + ATP + H2O = L-methionine(in) + ADP + phosphate + H(+). The enzyme catalyses D-methionine(out) + ATP + H2O = D-methionine(in) + ADP + phosphate + H(+). Functionally, part of the ABC transporter complex MetNIQ involved in methionine import. Responsible for energy coupling to the transport system. The sequence is that of Methionine import ATP-binding protein MetN from Lactococcus lactis subsp. cremoris (strain MG1363).